The primary structure comprises 340 residues: Alcohol dehydrogenase (340 aa).

Zn(2+)-binding residues include C40 and H63.

Belongs to the zinc-containing alcohol dehydrogenase family. The cofactor is Zn(2+).

The catalysed reaction is a primary alcohol + NAD(+) = an aldehyde + NADH + H(+). It carries out the reaction a secondary alcohol + NAD(+) = a ketone + NADH + H(+). This Rhizobium meliloti (strain 1021) (Ensifer meliloti) protein is Alcohol dehydrogenase (adhA).